The following is a 504-amino-acid chain: Probable cytochrome P450 6a21 (504 aa).

Heme is bound at residue Cys449.

The protein belongs to the cytochrome P450 family. It depends on heme as a cofactor.

It localises to the endoplasmic reticulum membrane. The protein resides in the microsome membrane. Functionally, may be involved in the metabolism of insect hormones and in the breakdown of synthetic insecticides. The sequence is that of Probable cytochrome P450 6a21 (Cyp6a21) from Drosophila melanogaster (Fruit fly).